Here is a 339-residue protein sequence, read N- to C-terminus: Quinolinate synthase (339 aa).

Residues H63 and S81 each coordinate iminosuccinate. A [4Fe-4S] cluster-binding site is contributed by C126. Iminosuccinate is bound by residues 152–154 (YVN) and S169. C211 contributes to the [4Fe-4S] cluster binding site. Residues 237-239 (HPE) and T254 contribute to the iminosuccinate site. C297 serves as a coordination point for [4Fe-4S] cluster.

The protein belongs to the quinolinate synthase family. Type 2 subfamily. Requires [4Fe-4S] cluster as cofactor.

It localises to the cytoplasm. The enzyme catalyses iminosuccinate + dihydroxyacetone phosphate = quinolinate + phosphate + 2 H2O + H(+). It functions in the pathway cofactor biosynthesis; NAD(+) biosynthesis; quinolinate from iminoaspartate: step 1/1. Functionally, catalyzes the condensation of iminoaspartate with dihydroxyacetone phosphate to form quinolinate. The sequence is that of Quinolinate synthase from Xylella fastidiosa (strain 9a5c).